The sequence spans 251 residues: Hydroxyacylglutathione hydrolase (251 aa).

Residues His53, His55, Asp57, His58, His110, Asp127, and His165 each contribute to the Zn(2+) site.

This sequence belongs to the metallo-beta-lactamase superfamily. Glyoxalase II family. In terms of assembly, monomer. The cofactor is Zn(2+).

The enzyme catalyses an S-(2-hydroxyacyl)glutathione + H2O = a 2-hydroxy carboxylate + glutathione + H(+). The protein operates within secondary metabolite metabolism; methylglyoxal degradation; (R)-lactate from methylglyoxal: step 2/2. In terms of biological role, thiolesterase that catalyzes the hydrolysis of S-D-lactoyl-glutathione to form glutathione and D-lactic acid. The chain is Hydroxyacylglutathione hydrolase from Blochmanniella pennsylvanica (strain BPEN).